The chain runs to 228 residues: Protein TIFY 10a (228 aa).

Residues 75–110 (REQEKRQLTIFYGGKVLVFDDFPAEKAKDLMQMASK) enclose the Tify domain. The short motif at 164–189 (PQARKASLHRFLEKRKDRLQAKAPYQ) is the Jas element. A Nuclear localization signal motif is present at residues 166–173 (ARKASLHR). The interval 175–228 (LEKRKDRLQAKAPYQGSPSDASPVKKELQESQPWLGLGPQVAAPDLSLRQESSQ) is disordered.

The protein belongs to the TIFY/JAZ family. In terms of assembly, interacts with COI1A and COI1B in a coronatine-dependent manner. Coronatine is an analog of jasmonoyl isoleucine (JA-Ile). Post-translationally, ubiquitinated. Targeted for degradation by the SCF(COI1) E3 ubiquitin ligase-proteasome pathway during jasmonate signaling.

The protein resides in the nucleus. Functionally, repressor of jasmonate responses. The sequence is that of Protein TIFY 10a from Oryza sativa subsp. japonica (Rice).